We begin with the raw amino-acid sequence, 430 residues long: Asparagine--tRNA ligase (430 aa).

Belongs to the class-II aminoacyl-tRNA synthetase family. Homodimer.

It localises to the cytoplasm. It carries out the reaction tRNA(Asn) + L-asparagine + ATP = L-asparaginyl-tRNA(Asn) + AMP + diphosphate + H(+). The sequence is that of Asparagine--tRNA ligase from Oceanobacillus iheyensis (strain DSM 14371 / CIP 107618 / JCM 11309 / KCTC 3954 / HTE831).